Consider the following 580-residue polypeptide: MSQVQVQVQNPSAALSGSQILSKNQSLLSQPLMSIPSTTSSLPSENAGRPIQNSALPSASLTPTSAAAESITPTVELNALCMKLGKKPMYKPVDPYSRMQSTYNYNMRGGAYPPRYFYPFPVPPLLYQVELSVGGQQFNGKGKTRQAAKHDAAAKALRTLQSEPLPERPEGRRPGEQVNGRESEEENLNKSEISQVFEIALKRNLPVNFEVARESGPPHMKSFVTRVSVGEFVGEGEGKSKKISKKNAAIAVLEELKKLPPLPTFERVKPRIKKKTKSIVRLQGSTDCSQGMNPISRLAQIQQAKKEKEPEYLLLTERGLPRRREFVMQVKVGNHTAEGTGTNKKVAKRNAAENMLEILGFKVPQAQPTKPALKSEEKTPIKKPGDGRKVTFFEPGSGDENGTSNKEDEFRLPYLSHQQLPAGILPMVPEVAQAVGVSQGHHTKDFTRVAPNPAKATVTAMIARELLYGGTSPTAETILKNNISSGHVPHGPLTRPSEQLDYLSRVQGFQVEYKDFPKNNKNEFVSLINCSSQPPLISHGIGKDVESCHDMAALNILKLLSELDQPSTEMPRTGNGPMSV.

Serine 2 bears the N-acetylserine mark. Polar residues predominate over residues serine 34 to serine 44. The tract at residues serine 34–alanine 59 is disordered. Residues threonine 72 to serine 162 form the DRBM 1 domain. Position 108 is an asymmetric dimethylarginine (arginine 108). Arginine 115 is modified (asymmetric dimethylarginine; alternate). The residue at position 115 (arginine 115) is an Omega-N-methylarginine; alternate. The tract at residues arginine 158–asparagine 189 is disordered. The segment covering leucine 165–glutamate 182 has biased composition (basic and acidic residues). Serine 183 is subject to Phosphoserine. In terms of domain architecture, DRBM 2 spans serine 191–lysine 258. Serine 285 bears the Phosphoserine mark. Positions asparagine 293–phenylalanine 361 constitute a DRBM 3 domain. The tract at residues glutamine 367 to serine 404 is disordered. Residues leucine 373–threonine 391 show a composition bias toward basic and acidic residues. Phosphoserine is present on serine 397.

As to quaternary structure, binds tubulin. Binds with low affinity single-stranded RNA or DNA homopolymers. Interacts with CASC3 in an RNA-dependent manner. Identified in a mRNP complex, at least composed of DHX9, DDX3X, ELAVL1, HNRNPU, IGF2BP1, ILF3, PABPC1, PCBP2, PTBP2, STAU1, STAU2, SYNCRIP and YBX1. Interacts with the influenza virus nonstructural protein NS1.

The protein localises to the cytoplasm. Its subcellular location is the rough endoplasmic reticulum. In terms of biological role, binds double-stranded RNA (regardless of the sequence) and tubulin. May play a role in specific positioning of mRNAs at given sites in the cell by cross-linking cytoskeletal and RNA components, and in stimulating their translation at the site. This is Double-stranded RNA-binding protein Staufen homolog 1 (STAU1) from Ailuropoda melanoleuca (Giant panda).